A 133-amino-acid polypeptide reads, in one-letter code: Profilin-2 (133 aa).

Belongs to the profilin family. In terms of assembly, occurs in many kinds of cells as a complex with monomeric actin in a 1:1 ratio.

It is found in the cytoplasm. It localises to the cytoskeleton. Its function is as follows. Binds to actin and affects the structure of the cytoskeleton. At high concentrations, profilin prevents the polymerization of actin, whereas it enhances it at low concentrations. By binding to PIP2, it inhibits the formation of IP3 and DG. The protein is Profilin-2 of Artemisia vulgaris (Mugwort).